Here is a 692-residue protein sequence, read N- to C-terminus: Ribonuclease J (692 aa).

Residues 1–91 form a disordered region; that stretch reads MTDNNQNNEN…RNYAKEELDN (91 aa). Positions 9–25 are enriched in basic and acidic residues; it reads ENHENSSENSKDHHEAR. Residues 57–79 show a composition bias toward basic residues; sequence HHKKEHRPNKKPNNHHKPKHASQ. Lys135 and Lys141 each carry N6-acetyllysine. 6 residues coordinate Zn(2+): His209, His211, Asp213, His214, His278, and Asp300. An N6-acetyllysine mark is found at Lys324, Lys338, and Lys398. 501-505 contributes to the substrate binding site; sequence HVSGH. Lys512 carries the N6-acetyllysine modification. His527 lines the Zn(2+) pocket. 3 positions are modified to N6-acetyllysine: Lys548, Lys635, and Lys650.

The protein belongs to the metallo-beta-lactamase superfamily. RNA-metabolizing metallo-beta-lactamase-like family. Bacterial RNase J subfamily. Homodimer. Homotetramer; dimer of homodimers. Interacts with RNA helicase RhpA, might be a member of a minimal RNA degradosome complex. Zn(2+) is required as a cofactor. Acetylated on nine lysine residues. Some of the residues are acetylated by multiple different mechanisms. RimL is partially responsible for the acetylation of Lys-324, Lys-398 and Lys-650. HPB8_1270 homolog is partially responsible for the acetylation of Lys-324, Lys-398, Lys-512 and Lys-650. Acetyl-phosphate-mediated non-enzymatic acetylation pathway takes part in the acetylation of Lys-135, Lys-324, Lys-398, Lys-512 and Lys-650. Acetylation of the remaining residues Lys-141, Lys-338, Lys-548 and Lys-635 occurs by a yet undetermined mechanism. Acetylation on a number of these residues is important for growth regulation and proper cell morphology.

It localises to the cytoplasm. Its activity is regulated as follows. Catalytic activity is regulated by the balance between homodimers and homotetramers, with homotetramers being the active forms of this enzyme. Acetylation allosterically regulates the homooligomerization state and hence the catalytic activity. In terms of biological role, an RNase that has 5'-3' exoribonuclease and endoribonuclease activity. Degrades 5'-monophosphorylated ssRNA and dsRNA, considerably more active on ssRNA. Association with RhpA significantly increases the dsRNase activity. Degrades RNA substrate with hairpin structures at both ends with low activity, but presence of RhpA significantly increases the activity on this substrate. Stimulates ATPase activity of RNA helicase RhpA. Involved in stabilization of mRNA but apparently not rRNA. This chain is Ribonuclease J, found in Helicobacter pylori (strain J99 / ATCC 700824) (Campylobacter pylori J99).